Here is a 123-residue protein sequence, read N- to C-terminus: Glutaredoxin-like protein (123 aa).

A Glutaredoxin domain is found at I27–K123.

Belongs to the glutaredoxin family.

The protein is Glutaredoxin-like protein (grxB) of Dictyostelium discoideum (Social amoeba).